The sequence spans 193 residues: Large ribosomal subunit protein bL12cy (193 aa).

The N-terminal 59 residues, 1-59, are a transit peptide targeting the chloroplast; that stretch reads MAATTLSIATTIRSSSFSSGLASAHHFPSRPLSIEFPFSFGVSSSSTLSHRAIYLHPIS. Residues 170-187 are compositionally biased toward basic and acidic residues; the sequence is GVTKDEAEEDKTQLEEAG. Positions 170 to 193 are disordered; the sequence is GVTKDEAEEDKTQLEEAGAKVSIV.

It belongs to the bacterial ribosomal protein bL12 family.

It localises to the plastid. The protein localises to the chloroplast. In Arabidopsis thaliana (Mouse-ear cress), this protein is Large ribosomal subunit protein bL12cy (RPL12B).